Consider the following 403-residue polypeptide: MSKFNRIHLVVLDSVGIGAAPDADKFFNAGVADTDSDTLGHISETAGLSVPNMVKIGLGNISRPIPLKTVPTEDNPTGYVTKLEEVSLGKDTMTGHWEIMGLNITEPFDTFWNGFPEEILTKIEEFSGRKIIREANKPYSGTAVIDDFGPRQMETGELIVYTSADPVLQIAAHEDIIPVEELYKICEYARSITLERPALLGRIIARPYVGEPGNFTRTANRHDYAVSPFQDTVLNKLADAGVPTYAVGKINDIFNGSGITNDMGHNKSNSHGIDTLIKTLQLPEFTKGFSFTNLVDFDANFGHRRDPEGYRDCLHEFDNRLPEIIANMKEDDLLLITADHGNDPTYAGTDHTREYIPLLAYSASFTGNGLIPQGHFADISATVAENFGVDAAMIGESFLGHLK.

6 residues coordinate Mn(2+): Asp13, Asp298, His303, Asp339, His340, and His351.

The protein belongs to the phosphopentomutase family. It depends on Mn(2+) as a cofactor.

It is found in the cytoplasm. It catalyses the reaction 2-deoxy-alpha-D-ribose 1-phosphate = 2-deoxy-D-ribose 5-phosphate. The catalysed reaction is alpha-D-ribose 1-phosphate = D-ribose 5-phosphate. It functions in the pathway carbohydrate degradation; 2-deoxy-D-ribose 1-phosphate degradation; D-glyceraldehyde 3-phosphate and acetaldehyde from 2-deoxy-alpha-D-ribose 1-phosphate: step 1/2. In terms of biological role, isomerase that catalyzes the conversion of deoxy-ribose 1-phosphate (dRib-1-P) and ribose 1-phosphate (Rib-1-P) to deoxy-ribose 5-phosphate (dRib-5-P) and ribose 5-phosphate (Rib-5-P), respectively. This Streptococcus pyogenes serotype M18 (strain MGAS8232) protein is Phosphopentomutase.